The primary structure comprises 197 residues: uncharacterized protein (197 aa).

4 helical membrane-spanning segments follow: residues 12–41, 78–100, 120–142, and 162–184; these read LCIFGIGLFVPATGTFACGLLLVLGFWVLF, LIQGFFPLVRMMLCPYLFITALS, VGVFGIMIAGISLVRELVAFGCV, and IRFAATGAGTLISCGIVLWIFRS.

The protein localises to the cell membrane. This is an uncharacterized protein from Treponema pallidum (strain Nichols).